A 225-amino-acid polypeptide reads, in one-letter code: UPF0173 metal-dependent hydrolase PF1764 (225 aa).

It belongs to the UPF0173 family.

The polypeptide is UPF0173 metal-dependent hydrolase PF1764 (Pyrococcus furiosus (strain ATCC 43587 / DSM 3638 / JCM 8422 / Vc1)).